Here is a 167-residue protein sequence, read N- to C-terminus: Insertion element IS1 2 protein InsB (167 aa).

The protein belongs to the transposase 27 family.

Its function is as follows. Absolutely required for transposition of IS1. This chain is Insertion element IS1 2 protein InsB (insB2), found in Escherichia coli (strain K12).